The sequence spans 470 residues: Fumarate hydratase class II (470 aa).

Residues Ser99–Thr101, His129–Asp132, Ser139–Asn141, and Thr187 contribute to the substrate site. His188 serves as the catalytic Proton donor/acceptor. The active site involves Ser318. Residues Ser319 and Lys324–Asn326 contribute to the substrate site.

The protein belongs to the class-II fumarase/aspartase family. Fumarase subfamily. Homotetramer.

The protein localises to the cytoplasm. The enzyme catalyses (S)-malate = fumarate + H2O. It participates in carbohydrate metabolism; tricarboxylic acid cycle; (S)-malate from fumarate: step 1/1. Functionally, involved in the TCA cycle. Catalyzes the stereospecific interconversion of fumarate to L-malate. This Halobacterium salinarum (strain ATCC 700922 / JCM 11081 / NRC-1) (Halobacterium halobium) protein is Fumarate hydratase class II.